Reading from the N-terminus, the 232-residue chain is GTP cyclohydrolase III (232 aa).

The protein belongs to the archaeal-type GTP cyclohydrolase family.

It carries out the reaction GTP + 3 H2O = 2-amino-5-formylamino-6-(5-phospho-D-ribosylamino)pyrimidin-4(3H)-one + 2 phosphate + 2 H(+). In terms of biological role, catalyzes the formation of 2-amino-5-formylamino-6-ribofuranosylamino-4(3H)-pyrimidinone ribonucleotide monophosphate and inorganic phosphate from GTP. Also has an independent pyrophosphate phosphohydrolase activity. The chain is GTP cyclohydrolase III from Saccharolobus islandicus (strain Y.N.15.51 / Yellowstone #2) (Sulfolobus islandicus).